Reading from the N-terminus, the 506-residue chain is Cytochrome P450 6a8 (506 aa).

C451 contributes to the heme binding site.

The protein belongs to the cytochrome P450 family. Heme is required as a cofactor.

It localises to the endoplasmic reticulum membrane. The protein resides in the microsome membrane. Functionally, involved in the metabolism of insect hormones and in the breakdown of synthetic insecticides. The sequence is that of Cytochrome P450 6a8 (Cyp6a8) from Drosophila melanogaster (Fruit fly).